Here is a 243-residue protein sequence, read N- to C-terminus: Putative C-type lectin protein A7 (243 aa).

The helical transmembrane segment at 23–43 (IFFILAATNLMIAAFALGCLA) threads the bilayer. One can recognise a C-type lectin domain in the interval 116 to 223 (GQKACYYVPP…CTTSKLCLCG (108 aa)). Cystine bridges form between cysteine 137-cysteine 222 and cysteine 198-cysteine 214.

It localises to the host membrane. The sequence is that of Putative C-type lectin protein A7 (A7) from Alcelaphine herpesvirus 1 (strain C500) (AlHV-1).